A 338-amino-acid polypeptide reads, in one-letter code: Glycerol-3-phosphate dehydrogenase [NAD(P)+] (338 aa).

Positions 13, 14, and 108 each coordinate NADPH. 3 residues coordinate sn-glycerol 3-phosphate: K108, G139, and S141. A143 serves as a coordination point for NADPH. Sn-glycerol 3-phosphate-binding residues include K194, D247, S257, R258, and N259. K194 acts as the Proton acceptor in catalysis. R258 provides a ligand contact to NADPH. 2 residues coordinate NADPH: V282 and E284.

It belongs to the NAD-dependent glycerol-3-phosphate dehydrogenase family.

The protein localises to the cytoplasm. It catalyses the reaction sn-glycerol 3-phosphate + NAD(+) = dihydroxyacetone phosphate + NADH + H(+). The catalysed reaction is sn-glycerol 3-phosphate + NADP(+) = dihydroxyacetone phosphate + NADPH + H(+). The protein operates within membrane lipid metabolism; glycerophospholipid metabolism. Its function is as follows. Catalyzes the reduction of the glycolytic intermediate dihydroxyacetone phosphate (DHAP) to sn-glycerol 3-phosphate (G3P), the key precursor for phospholipid synthesis. This Streptococcus suis (strain 98HAH33) protein is Glycerol-3-phosphate dehydrogenase [NAD(P)+].